The chain runs to 264 residues: Thymidylate synthase (264 aa).

Arg-21 is a binding site for dUMP. His-51 lines the (6R)-5,10-methylene-5,6,7,8-tetrahydrofolate pocket. 126–127 (RR) contacts dUMP. Cys-146 serves as the catalytic Nucleophile. Residues 166–169 (RSAD), Asn-177, and 207–209 (HIY) each bind dUMP. (6R)-5,10-methylene-5,6,7,8-tetrahydrofolate is bound at residue Asp-169. Residue Ala-263 coordinates (6R)-5,10-methylene-5,6,7,8-tetrahydrofolate.

It belongs to the thymidylate synthase family. Bacterial-type ThyA subfamily. Homodimer.

The protein resides in the cytoplasm. It carries out the reaction dUMP + (6R)-5,10-methylene-5,6,7,8-tetrahydrofolate = 7,8-dihydrofolate + dTMP. It participates in pyrimidine metabolism; dTTP biosynthesis. In terms of biological role, catalyzes the reductive methylation of 2'-deoxyuridine-5'-monophosphate (dUMP) to 2'-deoxythymidine-5'-monophosphate (dTMP) while utilizing 5,10-methylenetetrahydrofolate (mTHF) as the methyl donor and reductant in the reaction, yielding dihydrofolate (DHF) as a by-product. This enzymatic reaction provides an intracellular de novo source of dTMP, an essential precursor for DNA biosynthesis. The sequence is that of Thymidylate synthase from Parabacteroides distasonis (strain ATCC 8503 / DSM 20701 / CIP 104284 / JCM 5825 / NCTC 11152).